The chain runs to 640 residues: MFSCAKAYEDQNYSALKRACLRKKVLFEDPLFPATDDSLYYKGTPGPTVRWKRPKDICDDPRLFVDGISSHDLHQGQVGNCWFVAACSSLASRESLWQKVIPDWKEQEWNPEKPDSYAGIFHFNFWRFGEWVDVIVDDRLPTVNNQLIYCHSNSKNEFWCALVEKAYAKLAGCYQALDGGNTADALVDFTGGVSEPIDLTEGDLATDEAKRNQLFERVLKVHSRGGLISASIKAVTAADMEARLACGLVKGHAYAVTDVRKVRLGHGLLAFFKSEKLDMIRLRNPWGEREWTGPWSDTSEEWQKVSKSEREKMGVTVQDDGEFWMTFEDMCRYFTDIIKCRLINTSYLSIHKTWEEARLHGAWTRHEDPQQNRSGGCINHKDTFFQNPQYVFEVKKPEDEVLISIQQRPKRSTRREGKGENLAIGFDIYKVEENRQYRMHSLQHKAASSIYINSRSVFLRTELPEGRYVIIPTTFEPGHTGEFLLRVFTDVPSNCRELRLDEPPRTCWSSLCGYPQQVAQVHVLGAAGLKDSPTGANSYVIIKCEGEKVRSAVQRGTSTPEYNVKGIFYRKKLAQPITVQVWNHRVLKDEFLGQVHLKTAPDDLQDLHTLHLQDRSSRQPSDLPGIVAVRVLCSASLTAV.

Positions 26 to 343 (LFEDPLFPAT…FTDIIKCRLI (318 aa)) constitute a Calpain catalytic domain. Catalysis depends on residues Cys-81, His-252, and Asn-284. The segment at 344–496 (NTSYLSIHKT…VFTDVPSNCR (153 aa)) is domain III. Positions 499–617 (RLDEPPRTCW…HTLHLQDRSS (119 aa)) constitute a C2 domain.

It belongs to the peptidase C2 family.

Functionally, calcium-regulated non-lysosomal thiol-protease. The chain is Calpain-5 (Capn5) from Mus musculus (Mouse).